A 115-amino-acid chain; its full sequence is Urease subunit beta (115 aa).

Belongs to the urease beta subunit family. In terms of assembly, heterotrimer of UreA (gamma), UreB (beta) and UreC (alpha) subunits. Three heterotrimers associate to form the active enzyme.

The protein resides in the cytoplasm. The enzyme catalyses urea + 2 H2O + H(+) = hydrogencarbonate + 2 NH4(+). The protein operates within nitrogen metabolism; urea degradation; CO(2) and NH(3) from urea (urease route): step 1/1. The chain is Urease subunit beta from Arthrobacter sp. (strain FB24).